Consider the following 554-residue polypeptide: Undecaprenyl phosphate-alpha-4-amino-4-deoxy-L-arabinose arabinosyl transferase (554 aa).

11 consecutive transmembrane segments (helical) span residues 4–24 (LKGS…LLPI), 87–107 (FGSI…ATLL), 115–135 (FLAA…SYAV), 178–198 (FMTK…PIVI), 206–226 (LIIF…PWAL), 262–282 (YLPI…AALL), 293–313 (ELFF…VAKG), 315–335 (LPTY…AYAT), 352–372 (INLI…MGWV), 384–404 (QKVI…FATM), and 410–430 (HWHW…YLIP).

It belongs to the glycosyltransferase 83 family.

The protein resides in the cell inner membrane. It carries out the reaction 4-amino-4-deoxy-alpha-L-arabinopyranosyl di-trans,octa-cis-undecaprenyl phosphate + lipid IVA = lipid IIA + di-trans,octa-cis-undecaprenyl phosphate.. Its pathway is lipopolysaccharide metabolism; 4-amino-4-deoxy-beta-L-arabinose-lipid A biosynthesis. In terms of biological role, catalyzes the transfer of the L-Ara4N moiety of the glycolipid undecaprenyl phosphate-alpha-L-Ara4N to lipid A. The modified arabinose is attached to lipid A and is required for resistance to polymyxin and cationic antimicrobial peptides. This Yersinia enterocolitica serotype O:8 / biotype 1B (strain NCTC 13174 / 8081) protein is Undecaprenyl phosphate-alpha-4-amino-4-deoxy-L-arabinose arabinosyl transferase.